Here is a 589-residue protein sequence, read N- to C-terminus: MASYRPPYPPLPQPPSQNSLAPPPPPPSLPPPVPPPPPSHQPYSYPPPPPPPPHAYYQQGPHYPQFNQLQAPPPPPPPSAPPPLVPDPPRHQGPNDHEKGASKQVGRRERAKPDPSKHHHRSHLPHSKKIETEEERRLRKKRELEKQRQDEKHRQQMKNSHKSQMPKGHTEEKKPTPLLTTDRVENRLKKPTTFICKLKFRNELPDPSAQLKLMTIKRDKDQFTKYTITSLEKLWKPKIFVEPDLGIPLDLLDLSVYNPPKVKAPLAPEDEELLRDDDAVTPIKKDGIRRKERPTDKGMSWLVKTQYISSINNESARQSLTEKQAKELREMKGGINILHNLNNRERQIKDIEASFEACKSRPVHATNKNLQPVEVLPLLPYFDRYDEQFVVANFDGAPIADSEFFGKLDPSIRDAHESRAILKSYVVAGSDTANPEKFLAYMVPSLDELSKDIHDENEEISYTWVREYLWDVQPNANDPGTYLVSFDNGTASYLPLPMRLNLRKKRAREGRSSDEIEHFPVPSRVTVRRRSTVSVIEHKDSGVYSSRVGASSSKMRRLEDEGGLGRSWKHEPEQDANQYSDGNEDDYSE.

A compositionally biased stretch (pro residues) spans 1 to 54 (MASYRPPYPPLPQPPSQNSLAPPPPPPSLPPPVPPPPPSHQPYSYPPPPPPPPH). Disordered regions lie at residues 1–180 (MASY…PLLT) and 542–589 (GVYS…DYSE). Over residues 55 to 65 (AYYQQGPHYPQ) the composition is skewed to low complexity. The segment covering 71 to 87 (APPPPPPPSAPPPLVPD) has biased composition (pro residues). Residues 88-116 (PPRHQGPNDHEKGASKQVGRRERAKPDPS) show a composition bias toward basic and acidic residues. A compositionally biased stretch (basic residues) spans 117-127 (KHHHRSHLPHS). Residues 126-159 (HSKKIETEEERRLRKKRELEKQRQDEKHRQQMKN) adopt a coiled-coil conformation. Residues 128–154 (KKIETEEERRLRKKRELEKQRQDEKHR) show a composition bias toward basic and acidic residues.

This sequence belongs to the PAF1 family. Component of the nuclear PAF1 complex (PAF1C), which consists of VIP2/ELF7/PAF1, VIP3/SKI8/WDR61, VIP4/LEO1, VIP5/RTF1, VIP6/ELF8/CTR9 and CDC73. As to expression, expressed in roots, leaves and shoot apex.

It is found in the nucleus. Component of the PAF1 complex (PAF1C) which is involved in histone modifications such as methylation on histone H3 'Lys-4' (H3K4me3). Involved in regulation of flowering time. Required for the expression of the flowering repressors and MAD-box genes FLC, AGL27/FLM and AGL31/MAF2. Required for histone H3 trimethylation on 'Lys-4' H3K4me3 at the FLC and AGL27/FLM loci. Involved in the control of seed dormancy and germination. This Arabidopsis thaliana (Mouse-ear cress) protein is Protein PAF1 homolog.